We begin with the raw amino-acid sequence, 563 residues long: Coiled-coil domain-containing protein 63 (563 aa).

The segment at 1 to 29 (MSVLKKNRRKDSDTPQEPSEKAKEQQAEA) is disordered. The segment covering 10-29 (KDSDTPQEPSEKAKEQQAEA) has biased composition (basic and acidic residues). Coiled-coil stretches lie at residues 18-201 (PSEK…QLQH), 233-291 (AMKD…AKKH), and 341-422 (TELN…KKIN).

In terms of biological role, plays a role in spermiogenesis. Involved in the elongation of flagella and the formation of sperm heads. This Homo sapiens (Human) protein is Coiled-coil domain-containing protein 63.